The following is a 395-amino-acid chain: Secreted aspartyl protease 1 (395 aa).

Positions 1-20 (MQLSIQAIIGFVVAAGLAVA) are cleaved as a signal peptide. Residues 21-88 (SELPSPMTVN…HLLLDLIDKR (68 aa)) constitute a propeptide, removed in mature form. Residue Asn-41 is glycosylated (N-linked (GlcNAc...) asparagine). The 287-residue stretch at 105–391 (WAGDVQFGQS…DMGKNRMGFA (287 aa)) folds into the Peptidase A1 domain. Residues Asp-121 and Asp-283 contribute to the active site. Cys-321 and Cys-352 form a disulfide bridge.

This sequence belongs to the peptidase A1 family.

The protein localises to the secreted. With respect to regulation, inhibited by pepstatin A. Its function is as follows. Dominant secreted aspartyl protease that has a clear preference for aromatic residues in the P1' position directly adjacent to the cleavage site and, in particular, Trp. In addition, it generally cleaves peptides containing Lys, Arg, Phe, Tyr, or Nle (norleucine) in the P1 position, Nle and Glu at P2, and Arg and Val at P2'. Has important roles in facilitating the interaction of the yeast with the external environment. Is able to rapidly hydrolyze Staphylococcus aureus protein A, an important S.aureus virulence factor involved in immune evasion and biofilm formation. Shows anti-biofilm properties and thus plays a role in inter-kingdom interactions, beneficial for host skin health. The sequence is that of Secreted aspartyl protease 1 from Malassezia globosa (strain ATCC MYA-4612 / CBS 7966) (Dandruff-associated fungus).